The following is a 104-amino-acid chain: Histone H4 (104 aa).

The tract at residues methionine 1–lysine 21 is disordered.

The protein belongs to the histone H4 family. In terms of assembly, the nucleosome is a histone octamer containing two molecules each of H2A, H2B, H3 and H4 assembled in one H3-H4 heterotetramer and two H2A-H2B heterodimers. The octamer wraps approximately 147 bp of DNA.

It localises to the nucleus. Its subcellular location is the chromosome. Its function is as follows. Core component of nucleosome. Nucleosomes wrap and compact DNA into chromatin, limiting DNA accessibility to the cellular machineries which require DNA as a template. Histones thereby play a central role in transcription regulation, DNA repair, DNA replication and chromosomal stability. DNA accessibility is regulated via a complex set of post-translational modifications of histones, also called histone code, and nucleosome remodeling. In Sterkiella nova (Ciliate), this protein is Histone H4.